Reading from the N-terminus, the 296-residue chain is 33 kDa chaperonin (296 aa).

2 cysteine pairs are disulfide-bonded: cysteine 233–cysteine 235 and cysteine 267–cysteine 270.

Belongs to the HSP33 family. In terms of processing, under oxidizing conditions two disulfide bonds are formed involving the reactive cysteines. Under reducing conditions zinc is bound to the reactive cysteines and the protein is inactive.

It is found in the cytoplasm. Redox regulated molecular chaperone. Protects both thermally unfolding and oxidatively damaged proteins from irreversible aggregation. Plays an important role in the bacterial defense system toward oxidative stress. This chain is 33 kDa chaperonin, found in Actinobacillus pleuropneumoniae serotype 3 (strain JL03).